We begin with the raw amino-acid sequence, 371 residues long: Gamma-tocopherol methyltransferase, chloroplastic (371 aa).

A chloroplast-targeting transit peptide spans 1 to 65; the sequence is MAAAPVFFPS…NSNRIASRLQ (65 aa). The SAM motif I stretch occupies residues 153–162; the sequence is IVDVGCGIGG. The SAM motif II stretch occupies residues 216 to 224; the sequence is GQFDLVWSM. Positions 243-252 are SAM motif III; it reads VAAPGATIII.

Belongs to the class I-like SAM-binding methyltransferase superfamily. gTMT family. In terms of assembly, homodimer.

It is found in the plastid. Its subcellular location is the chloroplast inner membrane. The enzyme catalyses picrinine + S-adenosyl-L-methionine = ervincine + S-adenosyl-L-homocysteine + H(+). Its pathway is alkaloid biosynthesis; vindoline biosynthesis. In terms of biological role, S-adenosyl-L-methionine-dependent N-methyltransferase involved in the biosynthesis of biologically active monoterpenoid indole alkaloids (MIAs) natural products including vindoline. Inactive with picrinine as substrate. The chain is Gamma-tocopherol methyltransferase, chloroplastic from Catharanthus roseus (Madagascar periwinkle).